We begin with the raw amino-acid sequence, 201 residues long: Peptidyl-tRNA hydrolase (201 aa).

Tyr14 is a binding site for tRNA. His19 functions as the Proton acceptor in the catalytic mechanism. TRNA is bound by residues Phe64, Asn66, and Asn112.

The protein belongs to the PTH family. Monomer.

It localises to the cytoplasm. The catalysed reaction is an N-acyl-L-alpha-aminoacyl-tRNA + H2O = an N-acyl-L-amino acid + a tRNA + H(+). Its function is as follows. Hydrolyzes ribosome-free peptidyl-tRNAs (with 1 or more amino acids incorporated), which drop off the ribosome during protein synthesis, or as a result of ribosome stalling. Functionally, catalyzes the release of premature peptidyl moieties from peptidyl-tRNA molecules trapped in stalled 50S ribosomal subunits, and thus maintains levels of free tRNAs and 50S ribosomes. The sequence is that of Peptidyl-tRNA hydrolase from Rhodopseudomonas palustris (strain BisA53).